The primary structure comprises 85 residues: RNA-binding protein Hfq (85 aa).

The Sm domain occupies 9 to 68 (DPFLNALRRERVPVSIYLVNGIKLQGQVESFDQFVILLKNTVSQMVYKHAISTVVPARPF).

It belongs to the Hfq family. Homohexamer.

Functionally, RNA chaperone that binds small regulatory RNA (sRNAs) and mRNAs to facilitate mRNA translational regulation in response to envelope stress, environmental stress and changes in metabolite concentrations. Also binds with high specificity to tRNAs. This is RNA-binding protein Hfq from Shewanella frigidimarina (strain NCIMB 400).